The sequence spans 459 residues: tRNA-2-methylthio-N(6)-dimethylallyladenosine synthase (459 aa).

The region spanning 1–116 (MRAHLITYGC…IGKALETNER (116 aa)) is the MTTase N-terminal domain. [4Fe-4S] cluster-binding residues include Cys10, Cys46, Cys79, Cys148, Cys152, and Cys155. The Radical SAM core domain occupies 134–367 (PQGKLQAHLT…IAKQKEWSAR (234 aa)). Residues 370–433 (AAKVGTIQEV…PHMLYGRLIG (64 aa)) form the TRAM domain.

Belongs to the methylthiotransferase family. MiaB subfamily. In terms of assembly, monomer. [4Fe-4S] cluster is required as a cofactor.

It is found in the cytoplasm. It catalyses the reaction N(6)-dimethylallyladenosine(37) in tRNA + (sulfur carrier)-SH + AH2 + 2 S-adenosyl-L-methionine = 2-methylsulfanyl-N(6)-dimethylallyladenosine(37) in tRNA + (sulfur carrier)-H + 5'-deoxyadenosine + L-methionine + A + S-adenosyl-L-homocysteine + 2 H(+). Functionally, catalyzes the methylthiolation of N6-(dimethylallyl)adenosine (i(6)A), leading to the formation of 2-methylthio-N6-(dimethylallyl)adenosine (ms(2)i(6)A) at position 37 in tRNAs that read codons beginning with uridine. The protein is tRNA-2-methylthio-N(6)-dimethylallyladenosine synthase of Deinococcus geothermalis (strain DSM 11300 / CIP 105573 / AG-3a).